The sequence spans 164 residues: ATP synthase subunit b (164 aa).

The chain crosses the membrane as a helical span at residues 4–24 (IHFDLTLVVQVLSFLLLVYIL).

The protein belongs to the ATPase B chain family. F-type ATPases have 2 components, F(1) - the catalytic core - and F(0) - the membrane proton channel. F(1) has five subunits: alpha(3), beta(3), gamma(1), delta(1), epsilon(1). F(0) has three main subunits: a(1), b(2) and c(10-14). The alpha and beta chains form an alternating ring which encloses part of the gamma chain. F(1) is attached to F(0) by a central stalk formed by the gamma and epsilon chains, while a peripheral stalk is formed by the delta and b chains.

The protein localises to the cell membrane. In terms of biological role, f(1)F(0) ATP synthase produces ATP from ADP in the presence of a proton or sodium gradient. F-type ATPases consist of two structural domains, F(1) containing the extramembraneous catalytic core and F(0) containing the membrane proton channel, linked together by a central stalk and a peripheral stalk. During catalysis, ATP synthesis in the catalytic domain of F(1) is coupled via a rotary mechanism of the central stalk subunits to proton translocation. Functionally, component of the F(0) channel, it forms part of the peripheral stalk, linking F(1) to F(0). This Desulfitobacterium hafniense (strain Y51) protein is ATP synthase subunit b.